The primary structure comprises 189 residues: UPF0301 protein Plut_0637 (189 aa).

This sequence belongs to the UPF0301 (AlgH) family.

The protein is UPF0301 protein Plut_0637 of Chlorobium luteolum (strain DSM 273 / BCRC 81028 / 2530) (Pelodictyon luteolum).